We begin with the raw amino-acid sequence, 245 residues long: 8-amino-3,8-dideoxy-manno-octulosonate cytidylyltransferase (245 aa).

It belongs to the KdsB family.

The protein resides in the cytoplasm. It carries out the reaction 8-amino-3,8-dideoxy-alpha-D-manno-octulosonate + CTP = CMP-8-amino-3,8-dideoxy-alpha-D-manno-oct-2-ulosonate + diphosphate. The protein operates within bacterial outer membrane biogenesis; lipopolysaccharide biosynthesis. Its function is as follows. Activates KDO8N (a required 8-carbon sugar) for incorporation into bacterial lipopolysaccharide in the Shewanella genus. This is 8-amino-3,8-dideoxy-manno-octulosonate cytidylyltransferase from Shewanella putrefaciens (strain CN-32 / ATCC BAA-453).